Here is a 580-residue protein sequence, read N- to C-terminus: PTS system fructose-specific EIIB'BC component (580 aa).

PTS EIIB type-2 domains lie at Met-1–Ala-99 and Ile-120–Ala-215. The active-site Phosphocysteine intermediate; for EIIB activity is the Cys-126. A Phosphocysteine; by EIIA modification is found at Cys-126. The region spanning Ala-243–Ala-580 is the PTS EIIC type-2 domain. The next 9 membrane-spanning stretches (helical) occupy residues Met-254–Ile-274, Leu-289–Ile-309, Leu-332–Ala-352, Val-369–Gly-389, Ser-410–Val-430, Ala-451–Phe-471, Ala-483–Ala-503, Thr-509–Ala-529, and His-549–Leu-571.

The protein resides in the cell inner membrane. The catalysed reaction is D-fructose(out) + N(pros)-phospho-L-histidyl-[protein] = D-fructose 1-phosphate(in) + L-histidyl-[protein]. In terms of biological role, the phosphoenolpyruvate-dependent sugar phosphotransferase system (sugar PTS), a major carbohydrate active transport system, catalyzes the phosphorylation of incoming sugar substrates concomitantly with their translocation across the cell membrane. The enzyme II FruAB PTS system is involved in fructose transport. The chain is PTS system fructose-specific EIIB'BC component from Xanthomonas campestris pv. campestris (strain ATCC 33913 / DSM 3586 / NCPPB 528 / LMG 568 / P 25).